Consider the following 375-residue polypeptide: MATNPSNGLEGDNTLQSICYHRGSLKLLDQRKLPLETTYLDIKDASDGWLAIREMVVRGAPAIAISAALSLAVEVSNLENFNGTPVEAASFLAGKLDYLVSSRPTAVNLSDAATKLKEVVSKAAAAASNCQSVFQAYIEAAEIMLADDVASNKAIGSYGARFIQNQQKDPTKLSVLTHCNTGSLATAGYGTALGVIRALHGEGVLQRAYCTETRPFNQGSRLTAFELVHEKIPATLIADSAAAALMKDSKVSAVVVGADRVAANGDTANKIGTYSLALCAMHHNIPFYVAAPLTSFDSSLSSGKEIIIEERSPKEMLNARGGLGEQVAASGISVWNPAFDVTPASLISGIITEKGVITKTGMDDFDIKDFINKAG.

The Proton donor role is filled by Asp-259.

The protein belongs to the eIF-2B alpha/beta/delta subunits family. MtnA subfamily.

It localises to the cytoplasm. The protein resides in the nucleus. The enzyme catalyses 5-(methylsulfanyl)-alpha-D-ribose 1-phosphate = 5-(methylsulfanyl)-D-ribulose 1-phosphate. The protein operates within amino-acid biosynthesis; L-methionine biosynthesis via salvage pathway; L-methionine from S-methyl-5-thio-alpha-D-ribose 1-phosphate: step 1/6. Its function is as follows. Catalyzes the interconversion of methylthioribose-1-phosphate (MTR-1-P) into methylthioribulose-1-phosphate (MTRu-1-P). The protein is Methylthioribose-1-phosphate isomerase of Populus trichocarpa (Western balsam poplar).